Here is a 1465-residue protein sequence, read N- to C-terminus: DNA polymerase alpha catalytic subunit (1465 aa).

2 disordered regions span residues 20–39 (GSFA…GRQE) and 105–135 (LEDD…PSVT). A compositionally biased stretch (basic residues) spans 26–35 (RARREKKSKK). Thr180 is modified (phosphothreonine). Residues Ser192 and Ser215 each carry the phosphoserine modification. Residue Lys230 is modified to N6-acetyllysine. Residues 261 to 297 (DESMDTEKVDEKPVTAKTWDQETEPVERVEHEADPER) form a disordered region. Composition is skewed to basic and acidic residues over residues 265 to 274 (DTEKVDEKPV) and 285 to 297 (PVER…DPER). Residues 654–719 (RINECKVPYW…YHLSELVQQI (66 aa)) form a DNA-binding region. Position 974 is an N6-succinyllysine (Lys974). Residues 1249-1380 (QFRVHQYHKD…NGPLCPVCMK (132 aa)) form a DNA-binding region. Zn(2+) is bound by residues Cys1287, Cys1290, Cys1314, Cys1319, Cys1352, Cys1357, Cys1375, and Cys1378. The segment at 1287 to 1317 (CPSCGTENIYDNVFEGSGLDMEPSLYRCSNV) adopts a CysA-type zinc-finger fold. A CysB motif motif is present at residues 1352–1378 (CEEPTCCSRLRRLPLHFSRNGPLCPVC).

Belongs to the DNA polymerase type-B family. In terms of assembly, component of the alpha DNA polymerase complex (also known as the alpha DNA polymerase-primase complex) consisting of four subunits: the catalytic subunit POLA1, the regulatory subunit POLA2, and the primase complex subunits PRIM1 and PRIM2 respectively. Within the complex, POLA1 directly interacts with PRIM2. Interacts with PARP1; this interaction functions as part of the control of replication fork progression. Interacts with MCM10 and WDHD1; these interactions recruit the polymerase alpha complex to the pre-replicative complex bound to DNA. Interacts with RPA1; this interaction stabilizes the replicative complex and reduces the misincorporation rate of DNA polymerase alpha by acting as a fidelity clamp. As to expression, expressed in those zones containing proliferating cells in the developing embryonic neocortex, as well as in the lateral and medial ganglionic eminences. After birth, expressed in cells that remain proliferating in the ventricular and subventricular zone of the striatum.

The protein localises to the nucleus. It is found in the cytoplasm. The protein resides in the cytosol. The enzyme catalyses DNA(n) + a 2'-deoxyribonucleoside 5'-triphosphate = DNA(n+1) + diphosphate. Catalytic subunit of the DNA polymerase alpha complex (also known as the alpha DNA polymerase-primase complex) which plays an essential role in the initiation of DNA synthesis. During the S phase of the cell cycle, the DNA polymerase alpha complex (composed of a catalytic subunit POLA1, a regulatory subunit POLA2 and two primase subunits PRIM1 and PRIM2) is recruited to DNA at the replicative forks via direct interactions with MCM10 and WDHD1. The primase subunit of the polymerase alpha complex initiates DNA synthesis by oligomerising short RNA primers on both leading and lagging strands. These primers are initially extended by the polymerase alpha catalytic subunit and subsequently transferred to polymerase delta and polymerase epsilon for processive synthesis on the lagging and leading strand, respectively. The reason this transfer occurs is because the polymerase alpha has limited processivity and lacks intrinsic 3' exonuclease activity for proofreading error, and therefore is not well suited for replicating long complexes. In the cytosol, responsible for a substantial proportion of the physiological concentration of cytosolic RNA:DNA hybrids, which are necessary to prevent spontaneous activation of type I interferon responses. The protein is DNA polymerase alpha catalytic subunit (Pola1) of Mus musculus (Mouse).